Consider the following 206-residue polypeptide: Thymidylate kinase (206 aa).

11 to 18 (GIDGAGKT) serves as a coordination point for ATP.

The protein belongs to the thymidylate kinase family.

It carries out the reaction dTMP + ATP = dTDP + ADP. In terms of biological role, phosphorylation of dTMP to form dTDP in both de novo and salvage pathways of dTTP synthesis. The polypeptide is Thymidylate kinase (Paraburkholderia xenovorans (strain LB400)).